The chain runs to 491 residues: Aspartyl/glutamyl-tRNA(Asn/Gln) amidotransferase subunit B (491 aa).

This sequence belongs to the GatB/GatE family. GatB subfamily. In terms of assembly, heterotrimer of A, B and C subunits.

It catalyses the reaction L-glutamyl-tRNA(Gln) + L-glutamine + ATP + H2O = L-glutaminyl-tRNA(Gln) + L-glutamate + ADP + phosphate + H(+). The enzyme catalyses L-aspartyl-tRNA(Asn) + L-glutamine + ATP + H2O = L-asparaginyl-tRNA(Asn) + L-glutamate + ADP + phosphate + 2 H(+). Its function is as follows. Allows the formation of correctly charged Asn-tRNA(Asn) or Gln-tRNA(Gln) through the transamidation of misacylated Asp-tRNA(Asn) or Glu-tRNA(Gln) in organisms which lack either or both of asparaginyl-tRNA or glutaminyl-tRNA synthetases. The reaction takes place in the presence of glutamine and ATP through an activated phospho-Asp-tRNA(Asn) or phospho-Glu-tRNA(Gln). This chain is Aspartyl/glutamyl-tRNA(Asn/Gln) amidotransferase subunit B, found in Trichormus variabilis (strain ATCC 29413 / PCC 7937) (Anabaena variabilis).